The following is a 256-amino-acid chain: MREIYIFKDLQDLHKFSAKQIIDQIKIKKDSTLGFATGKTPLKTYQLLVKDHQENKTSWKDITSFNLDEFVDIDPSHPESFIKQMKSNLFDHLDINEQKINIPKSNSSNPDQEALNYENKIRKNNGIDLQFISIGVNGHIAYNEPGTPKDSLTHVSNLTKETILDLIAKNKFSSIDEVPKKAITMGVKTILNQCKKIMMVSFGKEKAQVTKQMLEDKPNENVTASFLQEHPNCIYILDKEAASLLNEETLKKAKWI.

Asp68 functions as the Proton acceptor; for enolization step in the catalytic mechanism. The active-site For ring-opening step is the Asn137. His139 acts as the Proton acceptor; for ring-opening step in catalysis. Glu144 acts as the For ring-opening step in catalysis.

This sequence belongs to the glucosamine/galactosamine-6-phosphate isomerase family. NagB subfamily.

The catalysed reaction is alpha-D-glucosamine 6-phosphate + H2O = beta-D-fructose 6-phosphate + NH4(+). Its pathway is amino-sugar metabolism; N-acetylneuraminate degradation; D-fructose 6-phosphate from N-acetylneuraminate: step 5/5. In terms of biological role, catalyzes the reversible isomerization-deamination of glucosamine 6-phosphate (GlcN6P) to form fructose 6-phosphate (Fru6P) and ammonium ion. The polypeptide is Glucosamine-6-phosphate deaminase (Mycoplasmopsis pulmonis (strain UAB CTIP) (Mycoplasma pulmonis)).